Reading from the N-terminus, the 79-residue chain is Calcium/calmodulin-dependent protein kinase II inhibitor 2 (79 aa).

Residues 43–69 are inhibitory domain; that stretch reads KRPPKLGQIGRAKRVVIEDDRIDEVLK.

This sequence belongs to the CAMK2N family.

The protein localises to the nucleus. It is found in the cytoplasm. The protein resides in the cytosol. Functionally, potent and specific cellular inhibitor of CaM-kinase II (CAMK2). Traps Ca(2+)/calmodulin on CAMK2. The protein is Calcium/calmodulin-dependent protein kinase II inhibitor 2 (camk2n2) of Xenopus tropicalis (Western clawed frog).